Reading from the N-terminus, the 242-residue chain is Putative serine/threonine-protein kinase (242 aa).

A Protein kinase domain is found at 49 to 242; that stretch reads FSSKNKVGEG…KSDVYSFGVL (194 aa). Residues 55–63 and lysine 77 each bind ATP; that span reads VGEGGCGAV. The Proton acceptor role is filled by aspartate 177.

It belongs to the protein kinase superfamily. Ser/Thr protein kinase family.

It carries out the reaction L-seryl-[protein] + ATP = O-phospho-L-seryl-[protein] + ADP + H(+). The enzyme catalyses L-threonyl-[protein] + ATP = O-phospho-L-threonyl-[protein] + ADP + H(+). This Helianthus annuus (Common sunflower) protein is Putative serine/threonine-protein kinase.